Here is a 273-residue protein sequence, read N- to C-terminus: WIMGHMVNAIAQIDEFVNLGANSIETDVSFDKNANPEYTYHGIPCDCGRTCTKWEYFNTFLGGLRKATTPGDSKYHEKLVLVVFDLKTGSLYDNQAYDAGTKLAKSLLQNYWNKGNNGGRAYIVLSIPNLDHYKLITGFKETLTKEEHPELMDKVGYDFSGNDDIGDVAKAYKKAGVTGHVWQSDGITNCLLRGLDRVRKAVANRDSSNGYINKVYYWTVDKRASTRDALDAGVDGIMTNYPDVIADVLSESAYTAKFRIATYDDNPWETFKN.

His5 is a catalytic residue. The Mg(2+) site is built by Glu25 and Asp27. The active-site Nucleophile is the His41. Intrachain disulfides connect Cys45–Cys51 and Cys47–Cys190. Asp85 contacts Mg(2+).

Belongs to the arthropod phospholipase D family. Class II subfamily. Mg(2+) serves as cofactor. Expressed by the venom gland.

The protein resides in the secreted. The enzyme catalyses an N-(acyl)-sphingosylphosphocholine = an N-(acyl)-sphingosyl-1,3-cyclic phosphate + choline. It catalyses the reaction an N-(acyl)-sphingosylphosphoethanolamine = an N-(acyl)-sphingosyl-1,3-cyclic phosphate + ethanolamine. The catalysed reaction is a 1-acyl-sn-glycero-3-phosphocholine = a 1-acyl-sn-glycero-2,3-cyclic phosphate + choline. It carries out the reaction a 1-acyl-sn-glycero-3-phosphoethanolamine = a 1-acyl-sn-glycero-2,3-cyclic phosphate + ethanolamine. In terms of biological role, dermonecrotic toxins cleave the phosphodiester linkage between the phosphate and headgroup of certain phospholipids (sphingolipid and lysolipid substrates), forming an alcohol (often choline) and a cyclic phosphate. This toxin acts on sphingomyelin (SM). It may also act on ceramide phosphoethanolamine (CPE), lysophosphatidylcholine (LPC) and lysophosphatidylethanolamine (LPE), but not on lysophosphatidylserine (LPS), and lysophosphatidylglycerol (LPG). It acts by transphosphatidylation, releasing exclusively cyclic phosphate products as second products. Induces dermonecrosis, hemolysis, increased vascular permeability, edema, inflammatory response, and platelet aggregation. This Loxosceles sabina (Tucson recluse spider) protein is Dermonecrotic toxin LsaSicTox-alphaIB1ai.